We begin with the raw amino-acid sequence, 243 residues long: Histone H2B.2 (243 aa).

Position 2 is a n,N,N-trimethylalanine; alternate (A2). N,N-dimethylalanine; alternate is present on A2. A2 is modified (N-methylalanine; alternate). Residues 67-145 (PDERSLPVGE…KKKKKKKRDD (79 aa)) form a disordered region. Positions 120–132 (GTLKKTDKVEKKQ) are enriched in basic and acidic residues. Residues 133-142 (ENKKKKKKKK) are compositionally biased toward basic residues.

It belongs to the histone H2B family. As to quaternary structure, the nucleosome is a histone octamer containing two molecules each of H2A, H2B, H3 and H4 assembled in one H3-H4 heterotetramer and two H2A-H2B heterodimers. The octamer wraps approximately 147 bp of DNA. In terms of processing, can be acetylated to form H2BK6ac.

Its subcellular location is the nucleus. It is found in the chromosome. Its function is as follows. Core component of nucleosome. Nucleosomes wrap and compact DNA into chromatin, limiting DNA accessibility to the cellular machineries which require DNA as a template. Histones thereby play a central role in transcription regulation, DNA repair, DNA replication and chromosomal stability. DNA accessibility is regulated via a complex set of post-translational modifications of histones, also called histone code, and nucleosome remodeling. The protein is Histone H2B.2 of Arabidopsis thaliana (Mouse-ear cress).